The primary structure comprises 380 residues: Protein kinase ORF15 (380 aa).

Residues 93–371 (FIPVKVAGCL…LLIAQLTKFI (279 aa)) form the Protein kinase domain. K118 contributes to the ATP binding site. The Proton acceptor role is filled by D217.

This sequence belongs to the protein kinase superfamily. Ser/Thr protein kinase family.

The catalysed reaction is L-seryl-[protein] + ATP = O-phospho-L-seryl-[protein] + ADP + H(+). It catalyses the reaction L-threonyl-[protein] + ATP = O-phospho-L-threonyl-[protein] + ADP + H(+). This Ictalurid herpesvirus 1 (strain Auburn) (IcHV-1) protein is Protein kinase ORF15 (ORF15).